The primary structure comprises 158 residues: C-type lectin lectoxin-Enh7 (158 aa).

The N-terminal stretch at 1–23 (MGQFTVVSLGLLAVFLSLSGAKG) is a signal peptide. 3 cysteine pairs are disulfide-bonded: cysteine 26-cysteine 37, cysteine 54-cysteine 154, and cysteine 129-cysteine 146. The C-type lectin domain occupies 33-155 (RNGVCNKLFP…CASLHPFICQ (123 aa)). Residues 119 to 121 (EPN) carry the Mannose-binding motif. 3 residues coordinate Ca(2+): glutamate 127, asparagine 142, and aspartate 143.

It belongs to the true venom lectin family. As to expression, expressed by the venom gland.

It is found in the secreted. Mannose-binding lectin which recognizes specific carbohydrate structures and agglutinates a variety of animal cells by binding to cell-surface glycoproteins and glycolipids. May be a calcium-dependent lectin. The protein is C-type lectin lectoxin-Enh7 of Pseudoferania polylepis (Macleay's water snake).